The chain runs to 758 residues: Solute carrier family 26 member 6 (758 aa).

Residues 1–117 (MGLPDGSDQG…PQGLAYALLA (117 aa)) are Cytoplasmic-facing. Residues 118–138 (GLPPMFGLYSSFYPVFIYFLF) form a helical membrane-spanning segment. Residues 139 to 187 (GTSRHISVGTFAVMSVMVGSVTESLTADKAFVQGLNATADDARVQVAYT) are Extracellular-facing. N-linked (GlcNAc) asparagine glycosylation occurs at asparagine 174. The chain crosses the membrane as a helical span at residues 188 to 208 (LSFLVGLFQVGLGLVHFGFVV). Topologically, residues 209–263 (TYLSEPLVRSYTTAASVQVLVSQLKYVFGIKLSSHSGPLSVIYTVLEVCAQLPET) are cytoplasmic. A helical transmembrane segment spans residues 264–284 (VPGTVVTAIVAGVALVLVKLL). Residues 285-292 (NEKLHRRL) lie on the Extracellular side of the membrane. The helical transmembrane segment at 293–313 (PLPIPGELLTLIGATGISYGV) threads the bilayer. Residues 314-340 (KLNDRFKVDVVGNITTGLIPPVAPKTE) are Cytoplasmic-facing. The helical transmembrane segment at 341–361 (LFATLVGNAFAIAVVGFAIAI) threads the bilayer. The Extracellular portion of the chain corresponds to 362-380 (SLGKIFALRHGYRVDSNQE). The chain crosses the membrane as a helical span at residues 381-401 (LVALGLSNLIGGFFQCFPVSC). The Cytoplasmic segment spans residues 402-417 (SMSRSLVQESTGGNTQ). The chain crosses the membrane as a helical span at residues 418–438 (VAGAVSSLFILLIIVKLGELF). The Extracellular segment spans residues 439–485 (RDLPKAVLAAVIIVNLKGMMKQFSDICSLWKANRVDLLIWLVTFVAT). Residues 486-506 (ILLNLDIGLAVSIVFSLLLVV) traverse the membrane as a helical segment. The Cytoplasmic segment spans residues 507–758 (VRMQLPHYSV…PKSPVLATKL (252 aa)). The 211-residue stretch at 531–741 (EYSGAKEVPG…ASVHDAVTFA (211 aa)) folds into the STAS domain. Positions 585 to 608 (EMKLKRMKKAKKSQKQDASSKISS) are disordered. The residue at position 751 (serine 751) is a Phosphoserine.

Interacts (via C-terminal domain) with PDZK1 (via C-terminal PDZ domain); the interaction induces chloride and oxalate exchange transport. Interacts with CFTR, SLC26A3 and NHERF1. Interacts with AHCYL1; the interaction increases SLC26A6 activity. Post-translationally, N-glycosylated. Glycosylation at Asn-174 positively regulates its chloride oxalate exchanger activity. Expressed in kidney (at protein level). Expressed in spermatogenic cells. Expressed in intestine, kidney, testis, brain, muscle, heart, and stomach. Expressed in the submandibular and sublingual salivary glands. As to expression, highly expressed in stomach, kidney, heart and small intestine, low in the lung, liver, testis, brain, skeletal muscle and colon. In terms of tissue distribution, expressed in the heart.

It is found in the cell membrane. The protein localises to the apical cell membrane. Its subcellular location is the cytoplasmic vesicle membrane. It localises to the microsome. It carries out the reaction 2 hydrogencarbonate(in) + chloride(out) = 2 hydrogencarbonate(out) + chloride(in). The enzyme catalyses oxalate(in) + chloride(out) = oxalate(out) + chloride(in). The catalysed reaction is oxalate(in) + formate(out) = oxalate(out) + formate(in). It catalyses the reaction oxalate(in) + sulfate(out) = oxalate(out) + sulfate(in). It carries out the reaction formate(in) + chloride(out) = formate(out) + chloride(in). The enzyme catalyses sulfate(in) = sulfate(out). Apical membrane chloride-bicarbonate exchange activity of the pancreatic duct is inhibited by 4,4'-diisothiocyanatostilbene-2,2'-disulfonic acid (DIDS). Oxalate secretion in the duodenum and chloride-formate exchange activity is inhibited by DIDS. Its activity is regulated as follows. Chloride-formate exchange activity and transcellular sulfate absorption is inhibited by 4,4'-diisothiocyanatostilbene-2,2'-disulfonic acid (DIDS). Its function is as follows. Apical membrane anion-exchanger with wide epithelial distribution that plays a role as a component of the pH buffering system for maintaining acid-base homeostasis. Acts as a versatile DIDS-sensitive inorganic and organic anion transporter that mediates the uptake of monovalent anions like chloride, bicarbonate, formate and hydroxyl ion and divalent anions like sulfate and oxalate. Functions in multiple exchange modes involving pairs of these anions, which include chloride-bicarbonate, chloride-oxalate, oxalate-formate, oxalate-sulfate and chloride-formate exchange. Apical membrane chloride-bicarbonate exchanger that mediates luminal chloride absorption and bicarbonate secretion by the small intestinal brush border membrane and contributes to intracellular pH regulation in the duodenal upper villous epithelium during proton-coupled peptide absorption, possibly by providing a bicarbonate import pathway. Its association with carbonic anhydrase CA2 forms a bicarbonate transport metabolon; hence maximizes the local concentration of bicarbonate at the transporter site. Also mediates intestinal chloride absorption and oxalate secretion, thereby preventing hyperoxaluria and calcium oxalate urolithiasis. Transepithelial oxalate secretion, chloride-formate, chloride-oxalate and chloride-bicarbonate transport activities in the duodenum are inhibited by PKC activation in a calcium-independent manner. The apical membrane chloride-bicarbonate exchanger also provides a major route for fluid and bicarbonate secretion into the proximal tubules of the kidney as well as into the proximal part of the interlobular pancreatic ductal tree, where it mediates electrogenic chloride-bicarbonate exchange with a chloride-bicarbonate stoichiometry of 1:2, and hence will dilute and alkalinize protein-rich acinar secretion. Also mediates the transcellular sulfate absorption and oxalate secretion across the apical membrane in the duodenum and the formate ion efflux at the apical brush border of cells in the proximal tubules of kidney. Plays a role in sperm capacitation by increasing intracellular pH. Mediates electrogenic chloride-bicarbonate exchange with a chloride-bicarbonate stoichiometry of 1:2. Also mediates exchange of chloride-formate and chloride-oxalate ions. Mediates transcellular sulfate absorption. The chain is Solute carrier family 26 member 6 from Mus musculus (Mouse).